The primary structure comprises 1071 residues: DNA-directed RNA polymerase subunit beta (1071 aa).

Belongs to the RNA polymerase beta chain family. In plastids the minimal PEP RNA polymerase catalytic core is composed of four subunits: alpha, beta, beta', and beta''. When a (nuclear-encoded) sigma factor is associated with the core the holoenzyme is formed, which can initiate transcription.

It is found in the plastid. Its subcellular location is the chloroplast. The catalysed reaction is RNA(n) + a ribonucleoside 5'-triphosphate = RNA(n+1) + diphosphate. Functionally, DNA-dependent RNA polymerase catalyzes the transcription of DNA into RNA using the four ribonucleoside triphosphates as substrates. The polypeptide is DNA-directed RNA polymerase subunit beta (Anthoceros angustus (Hornwort)).